A 284-amino-acid polypeptide reads, in one-letter code: uncharacterized protein (284 aa).

Residues Met1–Met8 lie on the Cytoplasmic side of the membrane. Residues Phe9–Tyr25 traverse the membrane as a helical segment. Residues His26–Thr80 lie on the Extracellular side of the membrane. A helical membrane pass occupies residues Val81–Phe101. The Cytoplasmic segment spans residues Tyr102 to Ile284.

The protein to S.pombe bem46 and M.tuberculosis Rv2307c.

The protein localises to the mitochondrion membrane. This is an uncharacterized protein from Saccharomyces cerevisiae (strain ATCC 204508 / S288c) (Baker's yeast).